Consider the following 95-residue polypeptide: Small ribosomal subunit protein uS19 (95 aa).

This sequence belongs to the universal ribosomal protein uS19 family.

In terms of biological role, protein S19 forms a complex with S13 that binds strongly to the 16S ribosomal RNA. The polypeptide is Small ribosomal subunit protein uS19 (Chloroflexus aurantiacus (strain ATCC 29366 / DSM 635 / J-10-fl)).